Consider the following 213-residue polypeptide: NDR1/HIN1-like protein 26 (213 aa).

Over 1–27 (MSQISITSPKHCAKKGGININNRHKKL) the chain is Cytoplasmic. The helical transmembrane segment at 28–48 (FFTFSTFFSGLLLIIFLVWLI) threads the bilayer. The Lumenal segment spans residues 49-213 (LHPERPEFSL…LQGTRCSTTI (165 aa)). N-linked (GlcNAc...) asparagine glycans are attached at residues Asn-67, Asn-77, and Asn-195.

As to expression, expressed in the vasculature of roots, rosette leaves, stems, cauline leaves and flowers. Specifically expressed in phloem.

It localises to the cell junction. The protein resides in the plasmodesma. It is found in the endoplasmic reticulum membrane. Involved in the regulation of sugar, amino acid and some primary metabolite export from companion cells (CCs) to sieve elements (SEs) in phloem. Required for apoplastic phloem sugar loading in source leaves in order to transport it to sink tissues. Required for correct sugar partitioning between source leaves and sink organs. This Arabidopsis thaliana (Mouse-ear cress) protein is NDR1/HIN1-like protein 26.